A 1414-amino-acid polypeptide reads, in one-letter code: Phenyloxazoline synthase MbtB (1414 aa).

Residues 5 to 78 (TACSEIIRAE…AWSQLVSAGT (74 aa)) enclose the Carrier 1 domain. O-(pantetheine 4'-phosphoryl)serine is present on serine 39. Residues 96–394 (EGEPFPLAPM…SSLLLDVDLT (299 aa)) are condensation/cyclization. Positions 579–975 (SYAQLRDQAS…RLPGVHAAAA (397 aa)) are adenylation. The 79-residue stretch at 1057–1135 (APRTVLQRAL…ALAQLLTGRE (79 aa)) folds into the Carrier 2 domain. At serine 1094 the chain carries O-(pantetheine 4'-phosphoryl)serine. The interval 1188-1413 (GAVLVFPHAG…AVARMVSADV (226 aa)) is thioesterase.

Belongs to the ATP-dependent AMP-binding enzyme family. MbtB subfamily. It depends on pantetheine 4'-phosphate as a cofactor. In terms of processing, 4'-phosphopantetheine is transferred from CoA to a specific serine in each of the two carrier protein domains, leading to their activation from apo to holo forms.

Its pathway is siderophore biosynthesis; mycobactin biosynthesis. In terms of biological role, involved in the initial steps of the mycobactin biosynthetic pathway. Putatively couples activated salicylic acid with serine or threonine and cyclizes this precursor to the hydroxyphenyloxazoline ring system present in this class of siderophores. Essential for growth in macrophages. The polypeptide is Phenyloxazoline synthase MbtB (mbtB) (Mycobacterium tuberculosis (strain ATCC 25618 / H37Rv)).